The chain runs to 305 residues: Sulfate adenylyltransferase subunit 2 (305 aa).

Belongs to the PAPS reductase family. CysD subfamily. As to quaternary structure, heterodimer composed of CysD, the smaller subunit, and CysN.

The enzyme catalyses sulfate + ATP + H(+) = adenosine 5'-phosphosulfate + diphosphate. It participates in sulfur metabolism; hydrogen sulfide biosynthesis; sulfite from sulfate: step 1/3. Its function is as follows. With CysN forms the ATP sulfurylase (ATPS) that catalyzes the adenylation of sulfate producing adenosine 5'-phosphosulfate (APS) and diphosphate, the first enzymatic step in sulfur assimilation pathway. APS synthesis involves the formation of a high-energy phosphoric-sulfuric acid anhydride bond driven by GTP hydrolysis by CysN coupled to ATP hydrolysis by CysD. The chain is Sulfate adenylyltransferase subunit 2 from Pseudomonas syringae pv. tomato (strain ATCC BAA-871 / DC3000).